The sequence spans 178 residues: ATP-dependent protease subunit HslV (178 aa).

Thr5 is a catalytic residue. Na(+) is bound by residues Gly161, Cys164, and Thr167.

This sequence belongs to the peptidase T1B family. HslV subfamily. A double ring-shaped homohexamer of HslV is capped on each side by a ring-shaped HslU homohexamer. The assembly of the HslU/HslV complex is dependent on binding of ATP.

It is found in the cytoplasm. It carries out the reaction ATP-dependent cleavage of peptide bonds with broad specificity.. Allosterically activated by HslU binding. In terms of biological role, protease subunit of a proteasome-like degradation complex believed to be a general protein degrading machinery. The sequence is that of ATP-dependent protease subunit HslV from Aliarcobacter butzleri (strain RM4018) (Arcobacter butzleri).